A 126-amino-acid polypeptide reads, in one-letter code: Aspartate 1-decarboxylase (126 aa).

The Schiff-base intermediate with substrate; via pyruvic acid role is filled by S25. Residue S25 is modified to Pyruvic acid (Ser). T57 contributes to the substrate binding site. The active-site Proton donor is the Y58. 73–75 (GAA) is a binding site for substrate.

Belongs to the PanD family. In terms of assembly, heterooctamer of four alpha and four beta subunits. Requires pyruvate as cofactor. Is synthesized initially as an inactive proenzyme, which is activated by self-cleavage at a specific serine bond to produce a beta-subunit with a hydroxyl group at its C-terminus and an alpha-subunit with a pyruvoyl group at its N-terminus.

The protein resides in the cytoplasm. The enzyme catalyses L-aspartate + H(+) = beta-alanine + CO2. The protein operates within cofactor biosynthesis; (R)-pantothenate biosynthesis; beta-alanine from L-aspartate: step 1/1. In terms of biological role, catalyzes the pyruvoyl-dependent decarboxylation of aspartate to produce beta-alanine. This Azotobacter vinelandii (strain DJ / ATCC BAA-1303) protein is Aspartate 1-decarboxylase.